Here is a 203-residue protein sequence, read N- to C-terminus: Glycerol-3-phosphate acyltransferase (203 aa).

6 helical membrane passes run 3 to 23 (ILLA…VVVS), 51 to 71 (KAAI…VWLV), 74 to 94 (FGIG…LGHL), 116 to 136 (AVHP…AFFF), 140 to 160 (SLAA…LFGT), and 164 to 178 (PVAW…LLIW).

Belongs to the PlsY family. As to quaternary structure, probably interacts with PlsX.

The protein localises to the cell inner membrane. The enzyme catalyses an acyl phosphate + sn-glycerol 3-phosphate = a 1-acyl-sn-glycero-3-phosphate + phosphate. The protein operates within lipid metabolism; phospholipid metabolism. Catalyzes the transfer of an acyl group from acyl-phosphate (acyl-PO(4)) to glycerol-3-phosphate (G3P) to form lysophosphatidic acid (LPA). This enzyme utilizes acyl-phosphate as fatty acyl donor, but not acyl-CoA or acyl-ACP. The polypeptide is Glycerol-3-phosphate acyltransferase (Burkholderia mallei (strain ATCC 23344)).